We begin with the raw amino-acid sequence, 314 residues long: DNA-directed RNA polymerase subunit alpha (314 aa).

The segment at 1–228 (MIEIEKPKIE…EHLNIFVGLT (228 aa)) is alpha N-terminal domain (alpha-NTD). The interval 245-314 (KEKVMEMTIE…DLGLGLRDDD (70 aa)) is alpha C-terminal domain (alpha-CTD).

The protein belongs to the RNA polymerase alpha chain family. As to quaternary structure, homodimer. The RNAP catalytic core consists of 2 alpha, 1 beta, 1 beta' and 1 omega subunit. When a sigma factor is associated with the core the holoenzyme is formed, which can initiate transcription.

The enzyme catalyses RNA(n) + a ribonucleoside 5'-triphosphate = RNA(n+1) + diphosphate. DNA-dependent RNA polymerase catalyzes the transcription of DNA into RNA using the four ribonucleoside triphosphates as substrates. This is DNA-directed RNA polymerase subunit alpha from Oceanobacillus iheyensis (strain DSM 14371 / CIP 107618 / JCM 11309 / KCTC 3954 / HTE831).